Here is a 344-residue protein sequence, read N- to C-terminus: Phosphoribosylformylglycinamidine cyclo-ligase (344 aa).

The protein belongs to the AIR synthase family.

The protein resides in the cytoplasm. It carries out the reaction 2-formamido-N(1)-(5-O-phospho-beta-D-ribosyl)acetamidine + ATP = 5-amino-1-(5-phospho-beta-D-ribosyl)imidazole + ADP + phosphate + H(+). The protein operates within purine metabolism; IMP biosynthesis via de novo pathway; 5-amino-1-(5-phospho-D-ribosyl)imidazole from N(2)-formyl-N(1)-(5-phospho-D-ribosyl)glycinamide: step 2/2. This Exiguobacterium sp. (strain ATCC BAA-1283 / AT1b) protein is Phosphoribosylformylglycinamidine cyclo-ligase.